A 134-amino-acid polypeptide reads, in one-letter code: Protein OPG030 (134 aa).

The BACK domain maps to Tyr88–Ile133.

This sequence belongs to the orthopoxvirus OPG030 family.

The protein is Protein OPG030 (OPG30) of Variola virus (isolate Human/India/Ind3/1967) (VARV).